Reading from the N-terminus, the 429-residue chain is Probable M18 family aminopeptidase 2 (429 aa).

Residues His-82, His-156, and His-401 each contribute to the Zn(2+) site.

It belongs to the peptidase M18 family. It depends on Zn(2+) as a cofactor.

The chain is Probable M18 family aminopeptidase 2 from Pseudomonas fluorescens (strain Pf0-1).